A 706-amino-acid chain; its full sequence is Fatty acid oxidation complex subunit alpha (706 aa).

The tract at residues 1 to 188 is enoyl-CoA hydratase; the sequence is MEKTFNLTRR…KMGLVNDVVP (188 aa). The tract at residues 308-706 is 3-hydroxyacyl-CoA dehydrogenase; that stretch reads RKVKKAVILG…TMARENVSFF (399 aa).

In the N-terminal section; belongs to the enoyl-CoA hydratase/isomerase family. The protein in the central section; belongs to the 3-hydroxyacyl-CoA dehydrogenase family. As to quaternary structure, heterotetramer of two alpha chains (FadJ) and two beta chains (FadI).

Its subcellular location is the cytoplasm. The enzyme catalyses a (3S)-3-hydroxyacyl-CoA = a (2E)-enoyl-CoA + H2O. It catalyses the reaction a 4-saturated-(3S)-3-hydroxyacyl-CoA = a (3E)-enoyl-CoA + H2O. It carries out the reaction a (3S)-3-hydroxyacyl-CoA + NAD(+) = a 3-oxoacyl-CoA + NADH + H(+). The catalysed reaction is (3S)-3-hydroxybutanoyl-CoA = (3R)-3-hydroxybutanoyl-CoA. Its pathway is lipid metabolism; fatty acid beta-oxidation. In terms of biological role, catalyzes the formation of a hydroxyacyl-CoA by addition of water on enoyl-CoA. Also exhibits 3-hydroxyacyl-CoA epimerase and 3-hydroxyacyl-CoA dehydrogenase activities. This Shewanella sp. (strain W3-18-1) protein is Fatty acid oxidation complex subunit alpha.